The sequence spans 395 residues: MNPSSVPHPLPPPGQQVIHVTQDLDTDLEALFNSVMNPKPSSWRKKILPESFFKEPDSGSHSRQSSTDSSGGHPGPRLAGGAQHVRSHSSPASLQLGTGAGAAGGPAQQHAHLRQQSYDVTDELPLPPGWEMTFTATGQRYFLNHIEKITTWQDPRKVMNQPLNHVNLHPSITSTSVPQRSMAVSQPNLAMNHQHQQVVATSLSPQNHPTQNQPTGLMSVPNALTTQQQQQQKLRLQRIQMERERIRMRQEELMRQEAALCRQLPMETETMAPVNTPAMSTDMRSVTNSSSDPFLNGGPYHSREQSTDSGLGLGCYSVPTTPEDFLSNMDEMDTGENSGQTPMTVNPQQTRFPDFLDCLPGTNVDLGTLESEDLIPLFNDVESALNKSEPFLTWL.

Lys-46 participates in a covalent cross-link: Glycyl lysine isopeptide (Lys-Gly) (interchain with G-Cter in ubiquitin). A disordered region spans residues 52 to 116 (FFKEPDSGSH…AQQHAHLRQQ (65 aa)). A compositionally biased stretch (polar residues) spans 61–70 (HSRQSSTDSS). A Phosphoserine modification is found at Ser-62. Ser-89 bears the Phosphoserine; by LATS2 mark. The 34-residue stretch at 124–157 (LPLPPGWEMTFTATGQRYFLNHIEKITTWQDPRK) folds into the WW domain. Residues 221 to 395 (PNALTTQQQQ…NKSEPFLTWL (175 aa)) form a required for interaction with PALS1 region. The stretch at 224 to 258 (LTTQQQQQQKLRLQRIQMERERIRMRQEELMRQEA) forms a coiled coil. Positions 277 to 293 (PAMSTDMRSVTNSSSDP) are enriched in polar residues. Positions 277-308 (PAMSTDMRSVTNSSSDPFLNGGPYHSREQSTD) are disordered. Residue Ser-290 is modified to Phosphoserine. Ser-306 is modified (phosphoserine; by LATS2). Positions 389-395 (EPFLTWL) match the PDZ-binding motif.

Binds to SLC9A3R2 via the PDZ motif at the plasma membrane. Binds to YWHAZ in vivo and in vitro through the phosphoserine-binding motif RSHSSP. Interacts (via coiled-coil domain) with SMAD2 (via MH1 domain), SMAD3 and SMAD4. Interacts with MED15. Interacts with PAX8 and NKX2-1. Interacts with TEAD1, TEAD2, TEAD3 and TEAD4. Interacts (via WW domain) with PALS1. Interacts with LATS1. Interacts with YAP1 (when phosphorylated at 'Ser-112'). Interacts (via WW domain) with PRRG4 (via cytoplasmic domain). Interacts (via WW domain) with AMOTL2 (via PPXY motif); the interaction promotes WWTR1/TAZ localization to the cytoplasm and tight junctions, thereby inhibiting its transcriptional coactivator properties. Interacts (via WW domain) with AMOT; the interaction facilitates translocation of WWTR1/TAZ to the cytoplasm. Phosphorylated by LATS2 and STK3/MST2. Phosphorylation by LATS2 results in creation of 14-3-3 binding sites, retention in the cytoplasm, and functional inactivation. Phosphorylation results in the inhibition of transcriptional coactivation through YWHAZ-mediated nuclear export. In terms of processing, ubiquitinated at Lys-46; leading to proteasomal degradation. Deubiquitinated and stabilized by UCHL1 at Lys-46; leading to inhibition of osteoclastogenesis. In terms of tissue distribution, highly expressed in kidney, heart, placenta and lung.

It is found in the nucleus. It localises to the cytoplasm. The protein localises to the cell membrane. Its subcellular location is the cell junction. The protein resides in the tight junction. Functionally, transcriptional coactivator which acts as a downstream regulatory target in the Hippo signaling pathway that plays a pivotal role in organ size control and tumor suppression by restricting proliferation and promoting apoptosis. The core of this pathway is composed of a kinase cascade wherein STK3/MST2 and STK4/MST1, in complex with its regulatory protein SAV1, phosphorylates and activates LATS1/2 in complex with its regulatory protein MOB1, which in turn phosphorylates and inactivates YAP1 oncoprotein and WWTR1/TAZ. WWTR1 enhances PAX8 and NKX2-1/TTF1-dependent gene activation. In conjunction with YAP1, involved in the regulation of TGFB1-dependent SMAD2 and SMAD3 nuclear accumulation. Plays a key role in coupling SMADs to the transcriptional machinery such as the mediator complex. Regulates embryonic stem-cell self-renewal, promotes cell proliferation and epithelial-mesenchymal transition. This chain is WW domain-containing transcription regulator protein 1, found in Mus musculus (Mouse).